Reading from the N-terminus, the 245-residue chain is Orotidine 5'-phosphate decarboxylase (245 aa).

Residues aspartate 22, lysine 44, 71–80 (DLKFHDIPNT), threonine 131, arginine 192, glutamine 201, glycine 221, and arginine 222 each bind substrate. The Proton donor role is filled by lysine 73.

Belongs to the OMP decarboxylase family. Type 1 subfamily. As to quaternary structure, homodimer.

It carries out the reaction orotidine 5'-phosphate + H(+) = UMP + CO2. The protein operates within pyrimidine metabolism; UMP biosynthesis via de novo pathway; UMP from orotate: step 2/2. Catalyzes the decarboxylation of orotidine 5'-monophosphate (OMP) to uridine 5'-monophosphate (UMP). The protein is Orotidine 5'-phosphate decarboxylase of Salmonella choleraesuis (strain SC-B67).